The chain runs to 100 residues: uncharacterized protein (100 aa).

A helical transmembrane segment spans residues 68-88 (VFLFFFTGSSPSFPAALLGLF).

The protein resides in the membrane. This is an uncharacterized protein from Saccharomyces cerevisiae (strain ATCC 204508 / S288c) (Baker's yeast).